The chain runs to 783 residues: Galactinol--sucrose galactosyltransferase (783 aa).

The protein belongs to the glycosyl hydrolases 36 family.

The enzyme catalyses alpha-D-galactosyl-(1-&gt;3)-1D-myo-inositol + sucrose = raffinose + myo-inositol. With respect to regulation, inhibited by Ag(2)+, Hg(2+), Zn(2+), p-chloromercuribenzoate (pCMB) and 1-deoxygalactonojirimycin. In terms of biological role, transglycosidase operating by a ping-pong reaction mechanism. Involved in the synthesis of raffinose, a major soluble carbohydrate in seeds, roots and tubers. Specific for galactinol and p-nitrophenyl-alpha-D-galactoside as galactosyl donors. Able to utilize sucrose, lactose, 4-beta-galactobiose, N-acetyl-D-lactosamine, trehalose and lacto-N-biose as acceptors. May also act as a glycoside hydrolase. This chain is Galactinol--sucrose galactosyltransferase (RFS), found in Oryza sativa subsp. japonica (Rice).